Reading from the N-terminus, the 238-residue chain is MRPSDRRPDLLRPVTLETGVNRYAEGSCLASFGHTKVLVTASLEEGVPPFLRGKGQGWVTAEYGMLPRATHTRGRREAAQGKQSGRTQEIQRLIGRSLRAVVDLKALGERQITVDCDVVQADGGTRTAAITGAWVALRLATRYLLEEGVIATDPILDQVAAISCGVFSGTPVLDLDYEEDSNAEADANFVLTGAGDIVEIQATGEKRGFSEAEFEALFALARKGIGELCELQRAATGG.

Residues Arg-86 and 124-126 (GTR) contribute to the phosphate site.

Belongs to the RNase PH family. As to quaternary structure, homohexameric ring arranged as a trimer of dimers.

The catalysed reaction is tRNA(n+1) + phosphate = tRNA(n) + a ribonucleoside 5'-diphosphate. Its function is as follows. Phosphorolytic 3'-5' exoribonuclease that plays an important role in tRNA 3'-end maturation. Removes nucleotide residues following the 3'-CCA terminus of tRNAs; can also add nucleotides to the ends of RNA molecules by using nucleoside diphosphates as substrates, but this may not be physiologically important. Probably plays a role in initiation of 16S rRNA degradation (leading to ribosome degradation) during starvation. In Phenylobacterium zucineum (strain HLK1), this protein is Ribonuclease PH.